Here is a 107-residue protein sequence, read N- to C-terminus: Thioredoxin (107 aa).

Residues 2 to 107 form the Thioredoxin domain; that stretch reads VVHIENLNAF…TLKQKINDHK (106 aa). Active-site nucleophile residues include C32 and C35. A disulfide bridge connects residues C32 and C35. S-nitrosocysteine occurs at positions 71 and 75.

It belongs to the thioredoxin family. May be nitrosylated on several cysteine residues, depending on the oxidation state. Nitrosylated Cys-75 may serve as donor for nitrosylation of target proteins.

The protein localises to the nucleus. It localises to the cytoplasm. It is found in the secreted. In terms of biological role, participates in various redox reactions through the reversible oxidation of its active center dithiol to a disulfide and catalyzes dithiol-disulfide exchange reactions. Plays a role in the reversible S-nitrosylation of cysteine residues in target proteins, and thereby contributes to the response to intracellular nitric oxide. Nitrosylates the active site Cys of CASP3 in response to nitric oxide (NO), and thereby inhibits caspase-3 activity. Induces the FOS/JUN AP-1 DNA binding activity in ionizing radiation (IR) cells through its oxidation/reduction status and stimulates AP-1 transcriptional activity. In Ictalurus punctatus (Channel catfish), this protein is Thioredoxin (txn).